Consider the following 532-residue polypeptide: Egg peptide speract receptor (532 aa).

A signal peptide spans 1–30 (MGLPMMLQQYCWAACLVICIAISSVDDVGA). The Extracellular portion of the chain corresponds to 31–491 (EQNYGREAVE…VVCEGSTAPP (461 aa)). SRCR domains lie at 43-144 (IRLI…VECL), 153-257 (LRMI…VVCK), 264-366 (IRLM…VVCA), and 382-485 (VRIV…VVCE). Cystine bridges form between Cys-68-Cys-133, Cys-81-Cys-143, Cys-112-Cys-122, Cys-178-Cys-244, Cys-191-Cys-256, Cys-223-Cys-233, Cys-289-Cys-355, Cys-302-Cys-365, Cys-335-Cys-345, Cys-406-Cys-475, Cys-419-Cys-484, and Cys-454-Cys-465. N-linked (GlcNAc...) asparagine glycosylation is found at Asn-78 and Asn-115. An N-linked (GlcNAc...) asparagine glycan is attached at Asn-459. A helical transmembrane segment spans residues 492–520 (SGMSIAVIGGAAGGGVAGLAVAAFAFYYI). Residues 521 to 532 (KFVKPAGGGGQA) lie on the Cytoplasmic side of the membrane.

It is found in the membrane. In terms of biological role, receptor for the egg peptide speract. This is Egg peptide speract receptor from Strongylocentrotus purpuratus (Purple sea urchin).